A 240-amino-acid chain; its full sequence is Uridylate kinase (240 aa).

Lys12 to Gly15 is a binding site for ATP. An involved in allosteric activation by GTP region spans residues Gly20–Gly25. Gly54 is a UMP binding site. Positions 55 and 59 each coordinate ATP. UMP-binding positions include Asp74 and Thr135 to Thr142. 3 residues coordinate ATP: Asn163, Tyr169, and Asp172.

Belongs to the UMP kinase family. As to quaternary structure, homohexamer.

It localises to the cytoplasm. The enzyme catalyses UMP + ATP = UDP + ADP. It functions in the pathway pyrimidine metabolism; CTP biosynthesis via de novo pathway; UDP from UMP (UMPK route): step 1/1. Allosterically activated by GTP. Inhibited by UTP. In terms of biological role, catalyzes the reversible phosphorylation of UMP to UDP. This chain is Uridylate kinase, found in Bacillus cereus (strain ATCC 14579 / DSM 31 / CCUG 7414 / JCM 2152 / NBRC 15305 / NCIMB 9373 / NCTC 2599 / NRRL B-3711).